Reading from the N-terminus, the 290-residue chain is Porphobilinogen deaminase (290 aa).

Residue Cys-238 is modified to S-(dipyrrolylmethanemethyl)cysteine.

Belongs to the HMBS family. Monomer. Dipyrromethane serves as cofactor.

It carries out the reaction 4 porphobilinogen + H2O = hydroxymethylbilane + 4 NH4(+). Its pathway is porphyrin-containing compound metabolism; protoporphyrin-IX biosynthesis; coproporphyrinogen-III from 5-aminolevulinate: step 2/4. Its function is as follows. Tetrapolymerization of the monopyrrole PBG into the hydroxymethylbilane pre-uroporphyrinogen in several discrete steps. The polypeptide is Porphobilinogen deaminase (Clostridium botulinum (strain Eklund 17B / Type B)).